Here is a 105-residue protein sequence, read N- to C-terminus: UPF0145 protein Sala_0338 (105 aa).

The protein belongs to the UPF0145 family.

This chain is UPF0145 protein Sala_0338, found in Sphingopyxis alaskensis (strain DSM 13593 / LMG 18877 / RB2256) (Sphingomonas alaskensis).